Here is a 279-residue protein sequence, read N- to C-terminus: Undecaprenyl-diphosphatase (279 aa).

8 helical membrane passes run 1 to 21 (MVLE…LPIS), 39 to 59 (GRFF…LYFF), 96 to 116 (LLLV…VRFV), 128 to 148 (FTMG…DALF), 155 to 175 (IFQI…FAII), 201 to 221 (FSFL…LVAG), 231 to 251 (YSLI…SALL), and 259 to 279 (FVLF…VSFF).

The protein belongs to the UppP family.

Its subcellular location is the cell membrane. It carries out the reaction di-trans,octa-cis-undecaprenyl diphosphate + H2O = di-trans,octa-cis-undecaprenyl phosphate + phosphate + H(+). Its function is as follows. Catalyzes the dephosphorylation of undecaprenyl diphosphate (UPP). Confers resistance to bacitracin. The polypeptide is Undecaprenyl-diphosphatase (Tropheryma whipplei (strain Twist) (Whipple's bacillus)).